The primary structure comprises 232 residues: DNA repair protein RecO (232 aa).

It belongs to the RecO family.

Its function is as follows. Involved in DNA repair and RecF pathway recombination. This chain is DNA repair protein RecO, found in Francisella tularensis subsp. novicida (strain U112).